We begin with the raw amino-acid sequence, 468 residues long: ATP synthase subunit beta (468 aa).

155-162 (GGAGVGKT) contributes to the ATP binding site.

The protein belongs to the ATPase alpha/beta chains family. As to quaternary structure, F-type ATPases have 2 components, CF(1) - the catalytic core - and CF(0) - the membrane proton channel. CF(1) has five subunits: alpha(3), beta(3), gamma(1), delta(1), epsilon(1). CF(0) has three main subunits: a(1), b(2) and c(9-12). The alpha and beta chains form an alternating ring which encloses part of the gamma chain. CF(1) is attached to CF(0) by a central stalk formed by the gamma and epsilon chains, while a peripheral stalk is formed by the delta and b chains.

The protein resides in the cell membrane. The catalysed reaction is ATP + H2O + 4 H(+)(in) = ADP + phosphate + 5 H(+)(out). Functionally, produces ATP from ADP in the presence of a proton gradient across the membrane. The catalytic sites are hosted primarily by the beta subunits. In Streptococcus agalactiae serotype III (strain NEM316), this protein is ATP synthase subunit beta.